Here is a 252-residue protein sequence, read N- to C-terminus: Triosephosphate isomerase (252 aa).

10–12 (NWK) is a binding site for substrate. His-96 serves as the catalytic Electrophile. Glu-168 serves as the catalytic Proton acceptor. Substrate is bound by residues Gly-174, Ser-213, and 234–235 (GG).

This sequence belongs to the triosephosphate isomerase family. As to quaternary structure, homodimer.

Its subcellular location is the cytoplasm. The enzyme catalyses D-glyceraldehyde 3-phosphate = dihydroxyacetone phosphate. The protein operates within carbohydrate biosynthesis; gluconeogenesis. Its pathway is carbohydrate degradation; glycolysis; D-glyceraldehyde 3-phosphate from glycerone phosphate: step 1/1. In terms of biological role, involved in the gluconeogenesis. Catalyzes stereospecifically the conversion of dihydroxyacetone phosphate (DHAP) to D-glyceraldehyde-3-phosphate (G3P). This Nitrosomonas europaea (strain ATCC 19718 / CIP 103999 / KCTC 2705 / NBRC 14298) protein is Triosephosphate isomerase.